A 97-amino-acid chain; its full sequence is uncharacterized protein (97 aa).

This is an uncharacterized protein from Escherichia coli (Bacteriophage T4).